A 517-amino-acid chain; its full sequence is Crotonobetaine/carnitine--CoA ligase (517 aa).

Belongs to the ATP-dependent AMP-binding enzyme family.

The enzyme catalyses 4-(trimethylamino)butanoate + ATP + CoA = 4-(trimethylamino)butanoyl-CoA + AMP + diphosphate. It catalyses the reaction crotonobetaine + ATP + CoA = crotonobetainyl-CoA + AMP + diphosphate. The catalysed reaction is (R)-carnitine + ATP + CoA = (R)-carnitinyl-CoA + AMP + diphosphate. Its pathway is amine and polyamine metabolism; carnitine metabolism. Functionally, catalyzes the transfer of CoA to carnitine, generating the initial carnitinyl-CoA needed for the CaiB reaction cycle. Also has activity toward crotonobetaine and gamma-butyrobetaine. The protein is Crotonobetaine/carnitine--CoA ligase of Salmonella arizonae (strain ATCC BAA-731 / CDC346-86 / RSK2980).